A 735-amino-acid polypeptide reads, in one-letter code: ATP-dependent RNA helicase dbp4 (735 aa).

A disordered region spans residues 1–24; that stretch reads MPKNRTGRSREAREKKRKEEEEEI. Positions 8 to 19 are enriched in basic and acidic residues; sequence RSREAREKKRKE. Residues 39–67 carry the Q motif motif; the sequence is DHFAELPLTQPTKSALKNAHFITLTEIQK. In terms of domain architecture, Helicase ATP-binding spans 70–244; that stretch reads IPSALKGRDI…RLSLQNPDFI (175 aa). 83 to 90 serves as a coordination point for ATP; the sequence is AKTGSGKT. The DEAD box motif lies at 192-195; that stretch reads DEAD. The Helicase C-terminal domain maps to 270 to 424; that stretch reads KLDILFGFIR…GKKTSIRNQL (155 aa). Residues 483-513 form a disordered region; that stretch reads GKLKNHSQSQKDYNSSTSLDSSEESEVDVEN. Residues Ser500, Ser503, Ser504, and Ser545 each carry the phosphoserine modification. The disordered stretch occupies residues 652 to 712; it reads KQLEKKRRRQ…DNDERDHGGI (61 aa). Residues 692-711 show a composition bias toward basic and acidic residues; sequence ETSKKQKKWFEDNDERDHGG.

It belongs to the DEAD box helicase family. DDX10/DBP4 subfamily. Interacts with the U3 and U14 snoRNAs. Associates with pre-ribosomal complexes.

The protein resides in the nucleus. It is found in the nucleolus. The enzyme catalyses ATP + H2O = ADP + phosphate + H(+). Functionally, ATP-dependent RNA helicase required for ribosome biogenesis. Involved in the release of U14 snoRNA in pre-ribosomal complexes. Required for pre-rRNA cleavage at site A2. This Schizosaccharomyces pombe (strain 972 / ATCC 24843) (Fission yeast) protein is ATP-dependent RNA helicase dbp4 (dbp4).